The sequence spans 444 residues: Flagellum-specific ATP synthase (444 aa).

164-171 (AGSGVGKS) contributes to the ATP binding site.

Belongs to the ATPase alpha/beta chains family.

The protein resides in the cytoplasm. It catalyses the reaction ATP + H2O + 4 H(+)(in) = ADP + phosphate + 5 H(+)(out). Its function is as follows. Probable catalytic subunit of a protein translocase for flagellum-specific export, or a proton translocase involved in local circuits at the flagellum. In Caulobacter vibrioides (strain ATCC 19089 / CIP 103742 / CB 15) (Caulobacter crescentus), this protein is Flagellum-specific ATP synthase (fliI).